We begin with the raw amino-acid sequence, 623 residues long: Zona pellucida sperm-binding protein 1 (623 aa).

The N-terminal stretch at 1 to 20 (MAWGCFVVLLLLAAAPLRLG) is a signal peptide. Residue Q21 is modified to Pyrrolidone carboxylic acid. Residues 21–590 (QRLHLEPGFE…GSSRNSSSRM (570 aa)) lie on the Extracellular side of the membrane. N49 and N68 each carry an N-linked (GlcNAc...) asparagine glycan. Residues 182–201 (IHPTPAPPSLGPGPAGSTVP) form a disordered region. The 41-residue stretch at 226-266 (ERCQVASGHIPCMVNGSSKETCQQAGCCYDSTKEEPCYYGN) folds into the P-type domain. Disulfide bonds link C228–C253, C237–C252, and C247–C262. N240 carries N-linked (GlcNAc...) asparagine glycosylation. Residues 271-542 (QCFKSGYFTL…DTCSTTCDSG (272 aa)) enclose the ZP domain. N371 carries N-linked (GlcNAc...) asparagine glycosylation. C449 and C470 form a disulfide bridge. The propeptide at 547–623 (RRSSGHHNIT…AQKLWEGIRY (77 aa)) is removed in mature form. N-linked (GlcNAc...) asparagine glycosylation is found at N554 and N585. The chain crosses the membrane as a helical span at residues 591–611 (LLLLLAITLALAAGIFVGLIW). The Cytoplasmic portion of the chain corresponds to 612 to 623 (AWAQKLWEGIRY).

Belongs to the ZP domain family. ZPB subfamily. As to quaternary structure, polymers of ZP2 and ZP3 organized into long filaments cross-linked by ZP1 homodimers. Interacts with ZP3. Post-translationally, proteolytically cleaved before the transmembrane segment to yield the secreted ectodomain incorporated in the zona pellucida. O-glycosylated. As to expression, expressed in oocytes.

It localises to the zona pellucida. Its subcellular location is the cell membrane. Its function is as follows. Component of the zona pellucida, an extracellular matrix surrounding oocytes which mediates sperm binding, induction of the acrosome reaction and prevents post-fertilization polyspermy. The zona pellucida is composed of 3 to 4 glycoproteins, ZP1, ZP2, ZP3, and ZP4. ZP1 ensures the structural integrity of the zona pellucida. This Mus musculus (Mouse) protein is Zona pellucida sperm-binding protein 1 (Zp1).